The primary structure comprises 353 residues: Phospho-N-acetylmuramoyl-pentapeptide-transferase (353 aa).

10 helical membrane-spanning segments follow: residues 16-36, 64-84, 88-108, 130-150, 160-180, 198-218, 228-248, 256-276, 281-301, and 330-350; these read YISVRAGISFFIAFVLTMYLM, AGTPTMGGVVFIFSTIIATVL, LNNFYIVGGILTLALFSLIGI, LIFQFLCAASIAGILFLYGHS, FPLFEMGVFGIVFWMFVIVGS, SILAFSTLSILVYVVGHAVFA, IAGELAIMGSAICGALIAFLW, VFMGDSGSLPLGAFMGYLAIV, ILLLAIGFIFVWETVSVILQV, and KIIVRFWIIAFMSNLIALLSL.

The protein belongs to the glycosyltransferase 4 family. MraY subfamily. Mg(2+) serves as cofactor.

It is found in the cell inner membrane. The enzyme catalyses UDP-N-acetyl-alpha-D-muramoyl-L-alanyl-gamma-D-glutamyl-meso-2,6-diaminopimeloyl-D-alanyl-D-alanine + di-trans,octa-cis-undecaprenyl phosphate = di-trans,octa-cis-undecaprenyl diphospho-N-acetyl-alpha-D-muramoyl-L-alanyl-D-glutamyl-meso-2,6-diaminopimeloyl-D-alanyl-D-alanine + UMP. It participates in cell wall biogenesis; peptidoglycan biosynthesis. Catalyzes the initial step of the lipid cycle reactions in the biosynthesis of the cell wall peptidoglycan: transfers peptidoglycan precursor phospho-MurNAc-pentapeptide from UDP-MurNAc-pentapeptide onto the lipid carrier undecaprenyl phosphate, yielding undecaprenyl-pyrophosphoryl-MurNAc-pentapeptide, known as lipid I. This Aliarcobacter butzleri (strain RM4018) (Arcobacter butzleri) protein is Phospho-N-acetylmuramoyl-pentapeptide-transferase.